The sequence spans 382 residues: Mucosal addressin cell adhesion molecule 1 (382 aa).

A signal peptide spans 1-18 (MDFGLALLLAGLLGLLLG). At 19–317 (QSLQVKPLQV…TGSSKPAGDQ (299 aa)) the chain is on the extracellular side. Ig-like domains are found at residues 23–112 (VKPL…LLVY) and 113–231 (AFPD…TSPE). Cystine bridges form between Cys-47/Cys-94, Cys-51/Cys-98, and Cys-134/Cys-204. Asn-83 carries N-linked (GlcNAc...) asparagine glycosylation. The interval 223–314 (VLHSPTSPEP…VIPTGSSKPA (92 aa)) is disordered. The segment at 226 to 317 (SPTSPEPPDT…TGSSKPAGDQ (92 aa)) is mucin-like. The 1; truncated repeat unit spans residues 228-231 (TSPE). Residues 228–271 (TSPEPPDTTSPESPDTTSPESPDTTSQEPPDTTSPEPPDKTSPE) form a 5.5 X 8 AA tandem repeats of [PS]-P-D-T-T-S-[QP]-E region. 5 tandem repeats follow at residues 232-239 (PPDTTSPE), 240-247 (SPDTTSPE), 248-255 (SPDTTSQE), 256-263 (PPDTTSPE), and 264-271 (PPDKTSPE). Residues 236–261 (TSPESPDTTSPESPDTTSQEPPDTTS) are compositionally biased toward low complexity. The span at 277–288 (GSTHTPRSPGST) shows a compositional bias: low complexity. The helical transmembrane segment at 318–338 (LPAALWTSSAVLGLLLLALPT) threads the bilayer. The Cytoplasmic portion of the chain corresponds to 339 to 382 (YHLWKRCRHLAEDDTHPPASLRLLPQVSAWAGLRGTGQVGISPS).

Homodimer. The Ser/Thr-rich mucin-like domain may provide possible sites for O-glycosylation. As to expression, highly expressed on high endothelial venules (HEV) and lamina propia venules found in the small intestine, and to a lesser extent in the colon and spleen. Very low levels of expression found in pancreas and brain. Not expressed in the thymus, prostate, ovaries, testis, heart, placenta, lung, liver, skeletal muscle, kidney or peripheral blood leukocytes.

The protein localises to the membrane. Cell adhesion leukocyte receptor expressed by mucosal venules, helps to direct lymphocyte traffic into mucosal tissues including the Peyer patches and the intestinal lamina propria. It can bind both integrin alpha-4/beta-7 and L-selectin, regulating both the passage and retention of leukocytes. Isoform 2, lacking the mucin-like domain, may be specialized in supporting integrin alpha-4/beta-7-dependent adhesion strengthening, independent of L-selectin binding. This is Mucosal addressin cell adhesion molecule 1 (MADCAM1) from Homo sapiens (Human).